The chain runs to 145 residues: MRAVVQRVKRGKVTVDGQVVSEIGPGLVALVGIRQGDGERECRYLAEKLVNLRIFEDGKGKFNYSVKDVGGEILVVSNFTVYGDTRKGRRPSFTEAAPPEVAREVFERFLDILKEQEVSVKSGIFQATMEVEIINDGPVTVIVEI.

Residues 137 to 138 (GP) carry the Gly-cisPro motif, important for rejection of L-amino acids motif.

Belongs to the DTD family. Homodimer.

It localises to the cytoplasm. The catalysed reaction is glycyl-tRNA(Ala) + H2O = tRNA(Ala) + glycine + H(+). It carries out the reaction a D-aminoacyl-tRNA + H2O = a tRNA + a D-alpha-amino acid + H(+). Its function is as follows. An aminoacyl-tRNA editing enzyme that deacylates mischarged D-aminoacyl-tRNAs. Also deacylates mischarged glycyl-tRNA(Ala), protecting cells against glycine mischarging by AlaRS. Acts via tRNA-based rather than protein-based catalysis; rejects L-amino acids rather than detecting D-amino acids in the active site. By recycling D-aminoacyl-tRNA to D-amino acids and free tRNA molecules, this enzyme counteracts the toxicity associated with the formation of D-aminoacyl-tRNA entities in vivo and helps enforce protein L-homochirality. This chain is D-aminoacyl-tRNA deacylase, found in Carboxydothermus hydrogenoformans (strain ATCC BAA-161 / DSM 6008 / Z-2901).